Reading from the N-terminus, the 363-residue chain is UDP-N-acetylglucosamine--N-acetylmuramyl-(pentapeptide) pyrophosphoryl-undecaprenol N-acetylglucosamine transferase (363 aa).

Residues 10 to 12, asparagine 124, serine 195, isoleucine 249, and glutamine 294 contribute to the UDP-N-acetyl-alpha-D-glucosamine site; that span reads TGG.

This sequence belongs to the glycosyltransferase 28 family. MurG subfamily.

It is found in the cell membrane. The enzyme catalyses Mur2Ac(oyl-L-Ala-gamma-D-Glu-L-Lys-D-Ala-D-Ala)-di-trans,octa-cis-undecaprenyl diphosphate + UDP-N-acetyl-alpha-D-glucosamine = beta-D-GlcNAc-(1-&gt;4)-Mur2Ac(oyl-L-Ala-gamma-D-Glu-L-Lys-D-Ala-D-Ala)-di-trans,octa-cis-undecaprenyl diphosphate + UDP + H(+). It functions in the pathway cell wall biogenesis; peptidoglycan biosynthesis. Cell wall formation. Catalyzes the transfer of a GlcNAc subunit on undecaprenyl-pyrophosphoryl-MurNAc-pentapeptide (lipid intermediate I) to form undecaprenyl-pyrophosphoryl-MurNAc-(pentapeptide)GlcNAc (lipid intermediate II). This Leuconostoc mesenteroides subsp. mesenteroides (strain ATCC 8293 / DSM 20343 / BCRC 11652 / CCM 1803 / JCM 6124 / NCDO 523 / NBRC 100496 / NCIMB 8023 / NCTC 12954 / NRRL B-1118 / 37Y) protein is UDP-N-acetylglucosamine--N-acetylmuramyl-(pentapeptide) pyrophosphoryl-undecaprenol N-acetylglucosamine transferase.